The chain runs to 344 residues: Meiotic expression up-regulated protein 26 (344 aa).

Its subcellular location is the nucleus. This is Meiotic expression up-regulated protein 26 (meu26) from Schizosaccharomyces pombe (strain 972 / ATCC 24843) (Fission yeast).